Consider the following 61-residue polypeptide: Large ribosomal subunit protein uL30 (61 aa).

The protein belongs to the universal ribosomal protein uL30 family. Part of the 50S ribosomal subunit.

This Chlorobaculum tepidum (strain ATCC 49652 / DSM 12025 / NBRC 103806 / TLS) (Chlorobium tepidum) protein is Large ribosomal subunit protein uL30.